A 247-amino-acid chain; its full sequence is Auxin-responsive protein IAA13 (247 aa).

The short motif at 14-18 (LELGL) is the EAR-like (transcriptional repression) element. A compositionally biased stretch (gly residues) spans 25 to 40 (GTAAKIGKSGGGGAWG). Disordered stretches follow at residues 25–44 (GTAA…ERGR) and 49–119 (KDFP…PKDV). A compositionally biased stretch (low complexity) spans 62–75 (SASHAGSSPPRSSS). The segment covering 87 to 98 (RMNSLVNNQATK) has biased composition (polar residues). Basic and acidic residues predominate over residues 106–119 (AGKKKVKDDEPKDV). Residues 129–225 (VGFIKVNMDG…SVKRLRVMKT (97 aa)) form the PB1 domain.

Belongs to the Aux/IAA family. As to quaternary structure, homodimers and heterodimers. Interacts with TPL. As to expression, preferentially expressed in stems.

It localises to the nucleus. Functionally, aux/IAA proteins are short-lived transcriptional factors that function as repressors of early auxin response genes at low auxin concentrations. Repression is thought to result from the interaction with auxin response factors (ARFs), proteins that bind to the auxin-responsive promoter element (AuxRE). Formation of heterodimers with ARF proteins may alter their ability to modulate early auxin response genes expression. The sequence is that of Auxin-responsive protein IAA13 (IAA13) from Arabidopsis thaliana (Mouse-ear cress).